A 268-amino-acid polypeptide reads, in one-letter code: Hydroxyethylthiazole kinase 2 (268 aa).

Residue methionine 42 participates in substrate binding. Positions 117 and 167 each coordinate ATP. Position 194 (glycine 194) interacts with substrate.

This sequence belongs to the Thz kinase family. Requires Mg(2+) as cofactor.

It catalyses the reaction 5-(2-hydroxyethyl)-4-methylthiazole + ATP = 4-methyl-5-(2-phosphooxyethyl)-thiazole + ADP + H(+). The protein operates within cofactor biosynthesis; thiamine diphosphate biosynthesis; 4-methyl-5-(2-phosphoethyl)-thiazole from 5-(2-hydroxyethyl)-4-methylthiazole: step 1/1. Its function is as follows. Catalyzes the phosphorylation of the hydroxyl group of 4-methyl-5-beta-hydroxyethylthiazole (THZ). This chain is Hydroxyethylthiazole kinase 2, found in Streptococcus pneumoniae (strain CGSP14).